Consider the following 634-residue polypeptide: Ras and EF-hand domain-containing protein homolog (634 aa).

2 EF-hand domains span residues 5 to 33 (DVEN…CPQL) and 33 to 68 (LDDN…TVQH). Residues aspartate 46, aspartate 48, serine 50, lysine 52, and glutamate 57 each coordinate Ca(2+). A coiled-coil region spans residues 169-310 (LSEKKHENER…RADFDQKQDE (142 aa)). Disordered regions lie at residues 216-237 (ERER…EMSE) and 308-328 (QDEL…SESV). GTP contacts are provided by residues 449 to 454 (AVGKSS), 552 to 555 (NKVD), and 585 to 586 (AL). Positions 632-634 (RGS) are cleaved as a propeptide — removed in mature form.

Belongs to the small GTPase superfamily. Rab family. As to quaternary structure, homodimer.

It localises to the cytoplasm. The protein resides in the perinuclear region. In terms of biological role, binds GTP and GDP. Plays a role in uterine seam cell development. This chain is Ras and EF-hand domain-containing protein homolog, found in Caenorhabditis briggsae.